The sequence spans 507 residues: O-fucosyltransferase 30 (507 aa).

A helical; Signal-anchor for type II membrane protein membrane pass occupies residues 26–46 (AIFLCSVSILVVFFIVVFFIT). Asn110, Asn146, Asn398, and Asn410 each carry an N-linked (GlcNAc...) asparagine glycan.

This sequence belongs to the glycosyltransferase GT106 family.

It localises to the membrane. Its pathway is glycan metabolism. In Arabidopsis thaliana (Mouse-ear cress), this protein is O-fucosyltransferase 30.